The primary structure comprises 536 residues: Probable cytochrome P450 318a1 (536 aa).

Over residues 439-457 (EEEQLSKGHNDSGSGEKRR) the composition is skewed to basic and acidic residues. A disordered region spans residues 439-460 (EEEQLSKGHNDSGSGEKRRQRD). C477 is a binding site for heme.

This sequence belongs to the cytochrome P450 family. The cofactor is heme.

The protein resides in the endoplasmic reticulum membrane. Its subcellular location is the microsome membrane. Its function is as follows. May be involved in the metabolism of insect hormones and in the breakdown of synthetic insecticides. The sequence is that of Probable cytochrome P450 318a1 (Cyp318a1) from Drosophila melanogaster (Fruit fly).